Here is a 308-residue protein sequence, read N- to C-terminus: ABC transporter protein AbcA (308 aa).

Positions 6-245 constitute an ABC transporter domain; sequence LAVSGVNKSF…YHKLLHMEGD (240 aa). 58–65 serves as a coordination point for ATP; it reads GHNGAGKS.

Belongs to the ABC transporter superfamily.

Influences the expression of the surface array protein gene (vapA). May have both regulatory and transport activities. In Aeromonas salmonicida, this protein is ABC transporter protein AbcA (abcA).